A 315-amino-acid polypeptide reads, in one-letter code: Acetyl-coenzyme A carboxylase carboxyl transferase subunit alpha (315 aa).

Positions 38–292 (RLQKKSNELT…KLRLKEDLAE (255 aa)) constitute a CoA carboxyltransferase C-terminal domain.

Belongs to the AccA family. In terms of assembly, acetyl-CoA carboxylase is a heterohexamer composed of biotin carboxyl carrier protein (AccB), biotin carboxylase (AccC) and two subunits each of ACCase subunit alpha (AccA) and ACCase subunit beta (AccD).

The protein localises to the cytoplasm. The enzyme catalyses N(6)-carboxybiotinyl-L-lysyl-[protein] + acetyl-CoA = N(6)-biotinyl-L-lysyl-[protein] + malonyl-CoA. Its pathway is lipid metabolism; malonyl-CoA biosynthesis; malonyl-CoA from acetyl-CoA: step 1/1. Component of the acetyl coenzyme A carboxylase (ACC) complex. First, biotin carboxylase catalyzes the carboxylation of biotin on its carrier protein (BCCP) and then the CO(2) group is transferred by the carboxyltransferase to acetyl-CoA to form malonyl-CoA. This Haemophilus influenzae (strain PittEE) protein is Acetyl-coenzyme A carboxylase carboxyl transferase subunit alpha.